Here is a 718-residue protein sequence, read N- to C-terminus: Myeloperoxidase (718 aa).

An N-terminal signal peptide occupies residues 1-15 (MKLLLALAGLLAPLA). Residues 16-138 (MLQTSNGATP…SSGCAYQDVR (123 aa)) constitute a propeptide that is removed on maturation. The N-linked (GlcNAc...) asparagine glycan is linked to asparagine 113. Cysteine 141 and cysteine 154 are joined by a disulfide. Aspartate 234 contributes to the heme b binding site. Histidine 235 functions as the Proton acceptor in the catalytic mechanism. Aspartate 236 is a binding site for Ca(2+). Cystine bridges form between cysteine 255–cysteine 265 and cysteine 259–cysteine 283. Cysteine 290 is subject to Cysteine sulfenic acid (-SOH). The N-linked (GlcNAc...) asparagine glycan is linked to asparagine 297. Residues threonine 308, phenylalanine 310, aspartate 312, and serine 314 each coordinate Ca(2+). N-linked (GlcNAc...) asparagine glycans are attached at residues asparagine 329 and asparagine 365. Cysteine 361 and cysteine 372 are disulfide-bonded. The heme b site is built by glutamate 382 and methionine 383. Residue asparagine 457 is glycosylated (N-linked (GlcNAc...) asparagine). Histidine 476 is a heme b binding site. 2 cysteine pairs are disulfide-bonded: cysteine 580/cysteine 637 and cysteine 678/cysteine 704. An N-linked (GlcNAc...) asparagine glycan is attached at asparagine 711.

It belongs to the peroxidase family. XPO subfamily. Homodimer; disulfide-linked. Each monomer consists of a light and a heavy chain. Found in a complex with CP and LTF; interacts directly with CP, which protects CP antioxidant properties by MPO. It depends on Ca(2+) as a cofactor. Requires heme b as cofactor.

The protein localises to the lysosome. It catalyses the reaction chloride + H2O2 + H(+) = hypochlorous acid + H2O. Part of the host defense system of polymorphonuclear leukocytes. It is responsible for microbicidal activity against a wide range of organisms. In the stimulated PMN, MPO catalyzes the production of hypohalous acids, primarily hypochlorous acid in physiologic situations, and other toxic intermediates that greatly enhance PMN microbicidal activity. Mediates the proteolytic cleavage of alpha-1-microglobulin to form t-alpha-1-microglobulin, which potently inhibits oxidation of low density lipoprotein particles and limits vascular damage. The sequence is that of Myeloperoxidase (Mpo) from Mus musculus (Mouse).